A 265-amino-acid polypeptide reads, in one-letter code: Glutamate racemase (265 aa).

Residues 12-13 (DS) and 44-45 (YG) each bind substrate. The active-site Proton donor/acceptor is the Cys75. 76 to 77 (NT) provides a ligand contact to substrate. Residue Cys186 is the Proton donor/acceptor of the active site. 187–188 (TH) contacts substrate.

The protein belongs to the aspartate/glutamate racemases family.

It carries out the reaction L-glutamate = D-glutamate. The protein operates within cell wall biogenesis; peptidoglycan biosynthesis. Its function is as follows. Provides the (R)-glutamate required for cell wall biosynthesis. The protein is Glutamate racemase of Pseudomonas putida (strain W619).